The sequence spans 211 residues: Uracil phosphoribosyltransferase (211 aa).

Residues arginine 79, arginine 104, and 131–139 (DPMLATGGS) contribute to the 5-phospho-alpha-D-ribose 1-diphosphate site. Residues isoleucine 196 and 201–203 (GDA) each bind uracil. Aspartate 202 lines the 5-phospho-alpha-D-ribose 1-diphosphate pocket.

This sequence belongs to the UPRTase family. Requires Mg(2+) as cofactor.

The catalysed reaction is UMP + diphosphate = 5-phospho-alpha-D-ribose 1-diphosphate + uracil. It functions in the pathway pyrimidine metabolism; UMP biosynthesis via salvage pathway; UMP from uracil: step 1/1. Allosterically activated by GTP. Its function is as follows. Catalyzes the conversion of uracil and 5-phospho-alpha-D-ribose 1-diphosphate (PRPP) to UMP and diphosphate. The protein is Uracil phosphoribosyltransferase of Lactococcus lactis subsp. cremoris (strain SK11).